The following is a 436-amino-acid chain: Na(+)/H(+) antiporter NhaA 1 (436 aa).

Transmembrane regions (helical) follow at residues 35 to 55 (FGGGLLLLGAVIALVWANSPW), 80 to 100 (LATWAADGLLAIFFFVVGLEL), 116 to 136 (ALPVIAAIGGMIVPALIYVGV), 147 to 167 (GWAIPTATDIAFALAVLAVIG), 176 to 196 (AFLLTLAVVDDLLAITVIAIF), 201 to 221 (FKLTPLLLALLPIALFGLLVQ), 226 to 246 (WWWALIPLAVVAWTLVHESGV), 283 to 303 (VSAGFAVPVFAFFAAGVSLRG), 313 to 333 (PIVVGIVAGLVLGKVLGIFGS), 354 to 374 (LLGVSLLAGIGFTVSLLIGEL), and 385 to 405 (VKAAVLTGSLIAALLASIVLI).

Belongs to the NhaA Na(+)/H(+) (TC 2.A.33) antiporter family.

The protein resides in the cell membrane. The enzyme catalyses Na(+)(in) + 2 H(+)(out) = Na(+)(out) + 2 H(+)(in). Its function is as follows. Na(+)/H(+) antiporter that extrudes sodium in exchange for external protons. This chain is Na(+)/H(+) antiporter NhaA 1, found in Salinispora tropica (strain ATCC BAA-916 / DSM 44818 / JCM 13857 / NBRC 105044 / CNB-440).